We begin with the raw amino-acid sequence, 396 residues long: Elongation factor Tu (396 aa).

The tr-type G domain occupies 10-205 (KPHVNIGTIG…ACDDNIPDPV (196 aa)). Residues 19-26 (GHVDHGKT) form a G1 region. 19-26 (GHVDHGKT) lines the GTP pocket. Thr26 is a Mg(2+) binding site. A G2 region spans residues 62–66 (GITIN). A G3 region spans residues 83-86 (DAPG). Residues 83–87 (DAPGH) and 138–141 (NKCD) each bind GTP. The G4 stretch occupies residues 138–141 (NKCD). The interval 175–177 (SAL) is G5.

The protein belongs to the TRAFAC class translation factor GTPase superfamily. Classic translation factor GTPase family. EF-Tu/EF-1A subfamily. Monomer.

It localises to the cytoplasm. It carries out the reaction GTP + H2O = GDP + phosphate + H(+). Its function is as follows. GTP hydrolase that promotes the GTP-dependent binding of aminoacyl-tRNA to the A-site of ribosomes during protein biosynthesis. The protein is Elongation factor Tu of Corynebacterium glutamicum (strain ATCC 13032 / DSM 20300 / JCM 1318 / BCRC 11384 / CCUG 27702 / LMG 3730 / NBRC 12168 / NCIMB 10025 / NRRL B-2784 / 534).